Reading from the N-terminus, the 305-residue chain is Ribonuclease BN (305 aa).

Zn(2+)-binding residues include His64, His66, Asp68, His69, His141, Asp212, and His270. Catalysis depends on Asp68, which acts as the Proton acceptor.

The protein belongs to the RNase Z family. RNase BN subfamily. In terms of assembly, homodimer. Requires Zn(2+) as cofactor.

Its function is as follows. Zinc phosphodiesterase, which has both exoribonuclease and endoribonuclease activities. In Escherichia coli O7:K1 (strain IAI39 / ExPEC), this protein is Ribonuclease BN.